The following is a 159-amino-acid chain: 2-C-methyl-D-erythritol 2,4-cyclodiphosphate synthase (159 aa).

2 residues coordinate a divalent metal cation: Asp10 and His12. 4-CDP-2-C-methyl-D-erythritol 2-phosphate is bound by residues 10–12 (DVH) and 36–37 (HS). Position 44 (His44) interacts with a divalent metal cation. 4-CDP-2-C-methyl-D-erythritol 2-phosphate is bound by residues 58 to 60 (DIG), 63 to 67 (FPDTD), 102 to 108 (AQAPKMA), 134 to 137 (TTTE), Phe141, 141 to 144 (FTGR), and Arg144.

The protein belongs to the IspF family. In terms of assembly, homotrimer. A divalent metal cation is required as a cofactor.

It catalyses the reaction 4-CDP-2-C-methyl-D-erythritol 2-phosphate = 2-C-methyl-D-erythritol 2,4-cyclic diphosphate + CMP. The protein operates within isoprenoid biosynthesis; isopentenyl diphosphate biosynthesis via DXP pathway; isopentenyl diphosphate from 1-deoxy-D-xylulose 5-phosphate: step 4/6. Involved in the biosynthesis of isopentenyl diphosphate (IPP) and dimethylallyl diphosphate (DMAPP), two major building blocks of isoprenoid compounds. Catalyzes the conversion of 4-diphosphocytidyl-2-C-methyl-D-erythritol 2-phosphate (CDP-ME2P) to 2-C-methyl-D-erythritol 2,4-cyclodiphosphate (ME-CPP) with a corresponding release of cytidine 5-monophosphate (CMP). In Shewanella oneidensis (strain ATCC 700550 / JCM 31522 / CIP 106686 / LMG 19005 / NCIMB 14063 / MR-1), this protein is 2-C-methyl-D-erythritol 2,4-cyclodiphosphate synthase.